Here is a 340-residue protein sequence, read N- to C-terminus: DNA-directed RNA polymerase subunit alpha (340 aa).

An alpha N-terminal domain (alpha-NTD) region spans residues 1-226 (MLIAQRPSLT…ELFGLARELN (226 aa)). The interval 243–340 (LAADLALPIE…DAGFVETEQY (98 aa)) is alpha C-terminal domain (alpha-CTD).

This sequence belongs to the RNA polymerase alpha chain family. In terms of assembly, homodimer. The RNAP catalytic core consists of 2 alpha, 1 beta, 1 beta' and 1 omega subunit. When a sigma factor is associated with the core the holoenzyme is formed, which can initiate transcription. Post-translationally, the last 19 amino acids in the C-terminal part are cleaved in the spore.

The catalysed reaction is RNA(n) + a ribonucleoside 5'-triphosphate = RNA(n+1) + diphosphate. In terms of biological role, DNA-dependent RNA polymerase catalyzes the transcription of DNA into RNA using the four ribonucleoside triphosphates as substrates. The sequence is that of DNA-directed RNA polymerase subunit alpha from Streptomyces granaticolor.